Consider the following 20-residue polypeptide: T cell receptor alpha joining 42 (20 aa).

A disordered region spans residues 1-20; that stretch reads YGGSQGNLIFGKGTKLSVKP.

In terms of assembly, alpha-beta TR is a heterodimer composed of an alpha and beta chain; disulfide-linked. The alpha-beta TR is associated with the transmembrane signaling CD3 coreceptor proteins to form the TR-CD3 (TcR or TCR). The assembly of alpha-beta TR heterodimers with CD3 occurs in the endoplasmic reticulum where a single alpha-beta TR heterodimer associates with one CD3D-CD3E heterodimer, one CD3G-CD3E heterodimer and one CD247 homodimer forming a stable octameric structure. CD3D-CD3E and CD3G-CD3E heterodimers preferentially associate with TR alpha and TR beta chains, respectively. The association of the CD247 homodimer is the last step of TcR assembly in the endoplasmic reticulum and is required for transport to the cell surface.

The protein localises to the cell membrane. J region of the variable domain of T cell receptor (TR) alpha chain that participates in the antigen recognition. Alpha-beta T cell receptors are antigen specific receptors which are essential to the immune response and are present on the cell surface of T lymphocytes. Recognize peptide-major histocompatibility (MH) (pMH) complexes that are displayed by antigen presenting cells (APC), a prerequisite for efficient T cell adaptive immunity against pathogens. Binding of alpha-beta TR to pMH complex initiates TR-CD3 clustering on the cell surface and intracellular activation of LCK that phosphorylates the ITAM motifs of CD3G, CD3D, CD3E and CD247 enabling the recruitment of ZAP70. In turn, ZAP70 phosphorylates LAT, which recruits numerous signaling molecules to form the LAT signalosome. The LAT signalosome propagates signal branching to three major signaling pathways, the calcium, the mitogen-activated protein kinase (MAPK) kinase and the nuclear factor NF-kappa-B (NF-kB) pathways, leading to the mobilization of transcription factors that are critical for gene expression and essential for T cell growth and differentiation. The T cell repertoire is generated in the thymus, by V-(D)-J rearrangement. This repertoire is then shaped by intrathymic selection events to generate a peripheral T cell pool of self-MH restricted, non-autoaggressive T cells. Post-thymic interaction of alpha-beta TR with the pMH complexes shapes TR structural and functional avidity. The chain is T cell receptor alpha joining 42 from Homo sapiens (Human).